Consider the following 298-residue polypeptide: Porphobilinogen deaminase (298 aa).

Cysteine 239 bears the S-(dipyrrolylmethanemethyl)cysteine mark.

Belongs to the HMBS family. In terms of assembly, monomer. Dipyrromethane is required as a cofactor.

The enzyme catalyses 4 porphobilinogen + H2O = hydroxymethylbilane + 4 NH4(+). Its pathway is porphyrin-containing compound metabolism; protoporphyrin-IX biosynthesis; coproporphyrinogen-III from 5-aminolevulinate: step 2/4. Functionally, tetrapolymerization of the monopyrrole PBG into the hydroxymethylbilane pre-uroporphyrinogen in several discrete steps. This is Porphobilinogen deaminase from Ehrlichia chaffeensis (strain ATCC CRL-10679 / Arkansas).